The primary structure comprises 20 residues: Antimicrobial peptide AJN-10 (20 aa).

The protein resides in the secreted. Its function is as follows. Displays antimicrobial activity against the Gram-negative bacterium A.hydrophila. The sequence is that of Antimicrobial peptide AJN-10 from Anguilla japonica (Japanese eel).